A 160-amino-acid polypeptide reads, in one-letter code: Large ribosomal subunit protein uL18 (160 aa).

Belongs to the universal ribosomal protein uL18 family. In terms of assembly, part of the 50S ribosomal subunit. Contacts the 5S and 23S rRNAs.

Its function is as follows. This is one of the proteins that bind and probably mediate the attachment of the 5S RNA into the large ribosomal subunit, where it forms part of the central protuberance. This chain is Large ribosomal subunit protein uL18, found in Thermoplasma volcanium (strain ATCC 51530 / DSM 4299 / JCM 9571 / NBRC 15438 / GSS1).